The primary structure comprises 465 residues: ATP synthase subunit beta (465 aa).

148–155 (GGAGVGKT) provides a ligand contact to ATP.

This sequence belongs to the ATPase alpha/beta chains family. As to quaternary structure, F-type ATPases have 2 components, CF(1) - the catalytic core - and CF(0) - the membrane proton channel. CF(1) has five subunits: alpha(3), beta(3), gamma(1), delta(1), epsilon(1). CF(0) has three main subunits: a(1), b(2) and c(9-12). The alpha and beta chains form an alternating ring which encloses part of the gamma chain. CF(1) is attached to CF(0) by a central stalk formed by the gamma and epsilon chains, while a peripheral stalk is formed by the delta and b chains.

It is found in the cell inner membrane. It catalyses the reaction ATP + H2O + 4 H(+)(in) = ADP + phosphate + 5 H(+)(out). Produces ATP from ADP in the presence of a proton gradient across the membrane. The catalytic sites are hosted primarily by the beta subunits. The sequence is that of ATP synthase subunit beta from Neisseria meningitidis serogroup C (strain 053442).